Consider the following 100-residue polypeptide: Small ribosomal subunit protein uS14c (100 aa).

Belongs to the universal ribosomal protein uS14 family. In terms of assembly, part of the 30S ribosomal subunit.

It is found in the plastid. Its subcellular location is the chloroplast. Its function is as follows. Binds 16S rRNA, required for the assembly of 30S particles. The polypeptide is Small ribosomal subunit protein uS14c (Porphyra purpurea (Red seaweed)).